Reading from the N-terminus, the 141-residue chain is ATP synthase epsilon chain (141 aa).

The protein belongs to the ATPase epsilon chain family. As to quaternary structure, F-type ATPases have 2 components, CF(1) - the catalytic core - and CF(0) - the membrane proton channel. CF(1) has five subunits: alpha(3), beta(3), gamma(1), delta(1), epsilon(1). CF(0) has three main subunits: a, b and c.

The protein localises to the cell inner membrane. Produces ATP from ADP in the presence of a proton gradient across the membrane. The chain is ATP synthase epsilon chain from Paraburkholderia phymatum (strain DSM 17167 / CIP 108236 / LMG 21445 / STM815) (Burkholderia phymatum).